Reading from the N-terminus, the 414-residue chain is Cytochrome c-554 (414 aa).

A signal peptide spans 1-24 (MQSSRPSDRQLAIVVSVAVGIVVA). 15 residues coordinate heme: M110, C131, C134, H135, M154, C179, C182, H183, M283, C294, C297, H298, C378, C381, and H382.

Binds 4 heme groups per subunit. In terms of processing, the N-terminus is blocked.

The protein localises to the periplasm. In terms of biological role, serves as the immediate electron donor to the oxidized BChl2 (bacteriochlorophyll dimer) that is oxidized in the first step of light-induced charge separation. Can also oxidize low-potential substrates. The sequence is that of Cytochrome c-554 (puf2C) from Chloroflexus aurantiacus (strain ATCC 29366 / DSM 635 / J-10-fl).